A 277-amino-acid polypeptide reads, in one-letter code: Uridine-cytidine kinase 1 (277 aa).

Residues 1–30 (MASAGGGGSESAAPEADRPQPRPFLIGVSG) are disordered. Residue 30–38 (GGTASGKST) coordinates ATP. Residues Asp87, Tyr115, His120, Arg169, Arg178, and Gln186 each coordinate substrate. Asp215 is a binding site for ATP. Over residues 238–250 (RHRGGPNGRNHKR) the composition is skewed to basic residues. Positions 238 to 277 (RHRGGPNGRNHKRTFPEPGDHPGVLATGKRSHLESSSRPH) are disordered. Thr251 is modified (phosphothreonine). The segment covering 268–277 (SHLESSSRPH) has biased composition (basic and acidic residues).

It belongs to the uridine kinase family.

It catalyses the reaction uridine + ATP = UMP + ADP + H(+). The catalysed reaction is cytidine + ATP = CMP + ADP + H(+). The protein operates within pyrimidine metabolism; CTP biosynthesis via salvage pathway; CTP from cytidine: step 1/3. It participates in pyrimidine metabolism; UMP biosynthesis via salvage pathway; UMP from uridine: step 1/1. Functionally, phosphorylates uridine and cytidine to uridine monophosphate and cytidine monophosphate. Does not phosphorylate deoxyribonucleosides or purine ribonucleosides. Can use ATP or GTP as a phosphate donor. In Mus musculus (Mouse), this protein is Uridine-cytidine kinase 1 (Uck1).